A 110-amino-acid chain; its full sequence is Early E3B 12.7 kDa protein (110 aa).

An N-terminal signal peptide occupies residues 1–16; that stretch reads MKTALVLFFMLIPVWA. A helical membrane pass occupies residues 37–57; sequence YIGWVYGIMSGLVFVSSVVSL.

Belongs to the adenoviridae E3_14 family. Phosphorylated on serine; O-glycosylated, but not N-glycosylated.

Its subcellular location is the host membrane. Down-regulates the EGF receptor and prevents cytolysis by TNF. In Homo sapiens (Human), this protein is Early E3B 12.7 kDa protein.